A 124-amino-acid chain; its full sequence is Flagellar transcriptional regulator FlhD (124 aa).

Belongs to the FlhD family. As to quaternary structure, homodimer; disulfide-linked. Forms a heterohexamer composed of two FlhC and four FlhD subunits. Each FlhC binds a FlhD dimer, forming a heterotrimer, and a hexamer assembles by dimerization of two heterotrimers.

The protein localises to the cytoplasm. Its function is as follows. Functions in complex with FlhC as a master transcriptional regulator that regulates transcription of several flagellar and non-flagellar operons by binding to their promoter region. Activates expression of class 2 flagellar genes, including fliA, which is a flagellum-specific sigma factor that turns on the class 3 genes. Also regulates genes whose products function in a variety of physiological pathways. This chain is Flagellar transcriptional regulator FlhD, found in Pectobacterium carotovorum (Erwinia carotovora).